Here is a 73-residue protein sequence, read N- to C-terminus: Defensin-like protein 34 (73 aa).

An N-terminal signal peptide occupies residues 1–25 (MASNKVSFFLVLCLCVLSTAEFGEA). Cystine bridges form between Cys-33–Cys-59, Cys-45–Cys-68, and Cys-49–Cys-70.

It belongs to the DEFL family.

Its subcellular location is the secreted. This is Defensin-like protein 34 from Arabidopsis thaliana (Mouse-ear cress).